A 313-amino-acid polypeptide reads, in one-letter code: Ribonuclease HIII (313 aa).

The segment at 62–88 (AERWTADAETPAPKKPASKKSIPSVYQ) is disordered. Residues 96 to 312 (MSVIGSDEVG…TQKAKRIASK (217 aa)) form the RNase H type-2 domain. A divalent metal cation-binding residues include aspartate 102, glutamate 103, and aspartate 207.

This sequence belongs to the RNase HII family. RnhC subfamily. Mn(2+) is required as a cofactor. The cofactor is Mg(2+).

It is found in the cytoplasm. The enzyme catalyses Endonucleolytic cleavage to 5'-phosphomonoester.. Functionally, endonuclease that specifically degrades the RNA of RNA-DNA hybrids. The chain is Ribonuclease HIII from Bacillus licheniformis (strain ATCC 14580 / DSM 13 / JCM 2505 / CCUG 7422 / NBRC 12200 / NCIMB 9375 / NCTC 10341 / NRRL NRS-1264 / Gibson 46).